Consider the following 361-residue polypeptide: Septin-2 (361 aa).

A Phosphotyrosine modification is found at tyrosine 17. Positions 34-306 constitute a Septin-type G domain; sequence KGFEFTLMVV…ENFRSERLKR (273 aa). The tract at residues 44–51 is G1 motif; the sequence is GESGLGKS. GTP contacts are provided by residues 44–52, threonine 78, glycine 104, and 183–186; these read GESGLGKST and KADT. Residues 101–104 are G3 motif; sequence DTPG. The segment at 182–185 is G4 motif; sequence AKAD. An N6-acetyllysine modification is found at lysine 190. At tyrosine 211 the chain carries Phosphotyrosine. Serine 218 is subject to Phosphoserine. GTP contacts are provided by glycine 241, arginine 256, and tyrosine 258. The interval 260–270 is important for dimerization; the sequence is WGVVEVENPEH.

The protein belongs to the TRAFAC class TrmE-Era-EngA-EngB-Septin-like GTPase superfamily. Septin GTPase family. Septins polymerize into heterooligomeric protein complexes that form filaments, and associate with cellular membranes, actin filaments and microtubules. GTPase activity is required for filament formation. Septin filaments are assembled from asymmetrical heterotrimers, composed of SEPTIN2, SEPTIN6 and SEPTIN7 that associate head-to-head to form a hexameric unit. Interaction between SEPTIN2 and SEPTIN7 seems indirect. Also interacts with SEPTIN9 and SEPTIN5. Interaction with SEPTIN4 not detected. Component of a septin core octameric complex consisting of SEPTIN12, SEPTIN7, SEPTIN6 and SEPTIN2 or SEPTIN4 in the order 12-7-6-2-2-6-7-12 or 12-7-6-4-4-6-7-12 and located in the sperm annulus. Interacts with MAP4. Interacts with DZIP1L. In terms of tissue distribution, widely expressed.

It localises to the cytoplasm. The protein resides in the cytoskeleton. The protein localises to the spindle. Its subcellular location is the chromosome. It is found in the centromere. It localises to the kinetochore. The protein resides in the cleavage furrow. The protein localises to the midbody. Its subcellular location is the cell cortex. It is found in the cell projection. It localises to the cilium membrane. The protein resides in the cilium. The protein localises to the flagellum. In terms of biological role, filament-forming cytoskeletal GTPase. Forms a filamentous structure with SEPTIN12, SEPTIN6, SEPTIN2 and probably SEPTIN4 at the sperm annulus which is required for the structural integrity and motility of the sperm tail during postmeiotic differentiation. Required for normal organization of the actin cytoskeleton. Plays a role in the biogenesis of polarized columnar-shaped epithelium by maintaining polyglutamylated microtubules, thus facilitating efficient vesicle transport, and by impeding MAP4 binding to tubulin. Required for the progression through mitosis. Forms a scaffold at the midplane of the mitotic splindle required to maintain CENPE localization at kinetochores and consequently chromosome congression. During anaphase, may be required for chromosome segregation and spindle elongation. Plays a role in ciliogenesis and collective cell movements. In cilia, required for the integrity of the diffusion barrier at the base of the primary cilium that prevents diffusion of transmembrane proteins between the cilia and plasma membranes: probably acts by regulating the assembly of the tectonic-like complex (also named B9 complex) by localizing TMEM231 protein. The polypeptide is Septin-2 (Mus musculus (Mouse)).